A 124-amino-acid chain; its full sequence is Quinol oxidase subunit 4 (124 aa).

Transmembrane regions (helical) follow at residues 16-36 (IVGFALSIVLTLLALWVAVYT), 44-64 (LWIIFGFAFIQAALQLLMFMH), and 78-98 (TLFGFFGAIVIVLGSIWIFAA).

Belongs to the cytochrome c oxidase bacterial subunit 4 family.

The protein localises to the cell membrane. It carries out the reaction 2 a quinol + O2 = 2 a quinone + 2 H2O. Functionally, catalyzes quinol oxidation with the concomitant reduction of oxygen to water. Major component for energy conversion during vegetative growth. The sequence is that of Quinol oxidase subunit 4 (qoxD) from Bacillus spizizenii (strain ATCC 23059 / NRRL B-14472 / W23) (Bacillus subtilis subsp. spizizenii).